Reading from the N-terminus, the 235-residue chain is Ribitol-5-phosphate cytidylyltransferase (235 aa).

Residues 7 to 10, 82 to 88, and Ser-113 contribute to the CTP site; these read LAGG and GADRNTS.

This sequence belongs to the IspD/TarI cytidylyltransferase family. TarI subfamily.

It carries out the reaction D-ribitol 5-phosphate + CTP + H(+) = CDP-L-ribitol + diphosphate. The protein operates within cell wall biogenesis; poly(ribitol phosphate) teichoic acid biosynthesis. Its function is as follows. Catalyzes the transfer of the cytidylyl group of CTP to D-ribitol 5-phosphate. The protein is Ribitol-5-phosphate cytidylyltransferase of Streptococcus pneumoniae serotype 2 (strain D39 / NCTC 7466).